We begin with the raw amino-acid sequence, 470 residues long: MALSSVSSCEPMEDEMSIMGSDTEDNFTGGDTCAEATRGLVNKSAFVPTQTVGTVSALRNVVGNPPKSVVVSFSASPQRAQPSNPKSERPAFGHGRRNRRRPFRRNNWKQQQRGWEKPEPENVPARQSAGSWPKRSSLPVHMRLGQRGGDSSSADSGHGGAGPSDRWRFKTRTQSVARVHRNRRRGNANHGSNTPGRSAGDRLNAAAARSIADVCRRVTSSRIGEMFHGARETLTTPVKNGGFRAENSSPWAPVLGFGSDQFNPEARRITWDTLVEHGVNLYKLFEVRSHAAEAARSLRDAVMRGENLLEALASADETLSWCKMIVTKNLPMRTRDPIISSSVALLDNLRLKLEPFMRCYLSSSGSPTLAELCDHQRLSDVACVPTFMFVMLARIARAVGSGAETVSRDALGPDGRVLADYVPGACLAGTLEAIDAHKRRCKADTCSLVSAYTLVPVYLHGKYFYCNQIF.

2 disordered regions span residues 1–31 and 73–202; these read MALSSVSSCEPMEDEMSIMGSDTEDNFTGGD and FSAS…AGDR. A compositionally biased stretch (polar residues) spans 73-85; the sequence is FSASPQRAQPSNP. 2 stretches are compositionally biased toward basic residues: residues 94–107 and 178–187; these read HGRRNRRRPFRRNN and RVHRNRRRGN. Zn(2+) contacts are provided by Cys359, His437, Cys441, and Cys446. The CHC2-type zinc-finger motif lies at 359-446; sequence CYLSSSGSPT…HKRRCKADTC (88 aa).

Belongs to the HHV-1 ICP27 protein family. As to quaternary structure, homodimer. Homodimerization is required for transactivation. Associates in a complex with RNA, and host export factors NXF1/TAP and ALYREF; these interactions allow nuclear export of viral transcripts. Interacts with three host shuttling SR proteins SRSF1, SRSF3 and SRSF7. Interacts with host SRPK1. Interacts with IE62; this interaction enhances IE62 transactivation.

The protein resides in the host cytoplasm. The protein localises to the host nucleus. In terms of biological role, multifunctional regulator of the expression of viral genes that mediates nuclear export of viral intronless mRNAs. This immediate early (EI) protein promotes the nuclear export of viral intronless mRNAs by interacting with mRNAs and host NXF1/TAP. The sequence is that of mRNA export factor ICP27 homolog from Equine herpesvirus 1 (strain Kentucky A) (EHV-1).